We begin with the raw amino-acid sequence, 265 residues long: Selenoprotein Pb (265 aa).

The first 18 residues, 1–18 (MQALWPLLLSALPALLGA), serve as a signal peptide directing secretion. N-linked (GlcNAc...) asparagine glycosylation is present at Asn28. Residue Sec64 is a non-standard amino acid, selenocysteine. Asn88, Asn178, Asn184, and Asn207 each carry an N-linked (GlcNAc...) asparagine glycan. The tract at residues 188-265 (SESSDSTKND…SHQEHVHNHR (78 aa)) is disordered. The segment covering 201–211 (ENNQRPNSTEP) has biased composition (polar residues). Residues 215-231 (AHHHHHQQHEPHHHHHN) show a composition bias toward basic residues. The segment covering 239 to 265 (KSGDSDVTGKPKEPPHHSHQEHVHNHR) has biased composition (basic and acidic residues).

Its subcellular location is the secreted. In terms of biological role, might be responsible for some of the extracellular antioxidant defense properties of selenium. The sequence is that of Selenoprotein Pb (sepp1b) from Danio rerio (Zebrafish).